We begin with the raw amino-acid sequence, 38 residues long: Large ribosomal subunit protein bL36 (38 aa).

Belongs to the bacterial ribosomal protein bL36 family.

The sequence is that of Large ribosomal subunit protein bL36 from Buchnera aphidicola subsp. Baizongia pistaciae (strain Bp).